Reading from the N-terminus, the 159-residue chain is Phosphopantetheine adenylyltransferase (159 aa).

Position 10 (threonine 10) interacts with substrate. ATP contacts are provided by residues threonine 10–phenylalanine 11 and histidine 18. Substrate-binding residues include lysine 42, methionine 74, and arginine 88. ATP-binding positions include glycine 89–arginine 91, glutamate 99, and tryptophan 124–serine 130.

The protein belongs to the bacterial CoaD family. In terms of assembly, homohexamer. It depends on Mg(2+) as a cofactor.

It localises to the cytoplasm. The catalysed reaction is (R)-4'-phosphopantetheine + ATP + H(+) = 3'-dephospho-CoA + diphosphate. Its pathway is cofactor biosynthesis; coenzyme A biosynthesis; CoA from (R)-pantothenate: step 4/5. Functionally, reversibly transfers an adenylyl group from ATP to 4'-phosphopantetheine, yielding dephospho-CoA (dPCoA) and pyrophosphate. This Salmonella dublin (strain CT_02021853) protein is Phosphopantetheine adenylyltransferase.